Here is a 474-residue protein sequence, read N- to C-terminus: Protein nucleotidyltransferase YdiU (474 aa).

ATP contacts are provided by Gly-89, Gly-91, Arg-92, Lys-112, Asp-124, Gly-125, Arg-178, and Arg-185. Asp-262 functions as the Proton acceptor in the catalytic mechanism. Mg(2+) is bound by residues Asn-263 and Asp-272. An ATP-binding site is contributed by Asp-272.

It belongs to the SELO family. The cofactor is Mg(2+). Requires Mn(2+) as cofactor.

The enzyme catalyses L-seryl-[protein] + ATP = 3-O-(5'-adenylyl)-L-seryl-[protein] + diphosphate. It catalyses the reaction L-threonyl-[protein] + ATP = 3-O-(5'-adenylyl)-L-threonyl-[protein] + diphosphate. The catalysed reaction is L-tyrosyl-[protein] + ATP = O-(5'-adenylyl)-L-tyrosyl-[protein] + diphosphate. It carries out the reaction L-histidyl-[protein] + UTP = N(tele)-(5'-uridylyl)-L-histidyl-[protein] + diphosphate. The enzyme catalyses L-seryl-[protein] + UTP = O-(5'-uridylyl)-L-seryl-[protein] + diphosphate. It catalyses the reaction L-tyrosyl-[protein] + UTP = O-(5'-uridylyl)-L-tyrosyl-[protein] + diphosphate. Its function is as follows. Nucleotidyltransferase involved in the post-translational modification of proteins. It can catalyze the addition of adenosine monophosphate (AMP) or uridine monophosphate (UMP) to a protein, resulting in modifications known as AMPylation and UMPylation. The polypeptide is Protein nucleotidyltransferase YdiU (Trichodesmium erythraeum (strain IMS101)).